The following is a 131-amino-acid chain: GATA zinc finger domain-containing protein 2 (131 aa).

Residues 21–55 (STATDATSADGAASETDAASATDTTSATDPTSATD) show a composition bias toward low complexity. The tract at residues 21-85 (STATDATSAD…RGRPYISTPP (65 aa)) is disordered. Residues 57 to 74 (IATTNTTGITSSGPTTNG) show a composition bias toward polar residues. The GATA-type zinc finger occupies 88–115 (CYDCGRTRSPYWRKGTYNGQVVHLCNAC).

This Dictyostelium discoideum (Social amoeba) protein is GATA zinc finger domain-containing protein 2 (comH).